The sequence spans 570 residues: Dihydroxy-acid dehydratase 2 (570 aa).

Position 51 (Cys51) interacts with [2Fe-2S] cluster. Asp83 is a binding site for Mg(2+). Cys124 contacts [2Fe-2S] cluster. The Mg(2+) site is built by Asp125 and Lys126. Lys126 carries the N6-carboxylysine modification. Residue Cys196 coordinates [2Fe-2S] cluster. Glu446 lines the Mg(2+) pocket. Ser472 acts as the Proton acceptor in catalysis.

It belongs to the IlvD/Edd family. As to quaternary structure, homodimer. [2Fe-2S] cluster is required as a cofactor. The cofactor is Mg(2+).

The catalysed reaction is (2R)-2,3-dihydroxy-3-methylbutanoate = 3-methyl-2-oxobutanoate + H2O. The enzyme catalyses (2R,3R)-2,3-dihydroxy-3-methylpentanoate = (S)-3-methyl-2-oxopentanoate + H2O. Its pathway is amino-acid biosynthesis; L-isoleucine biosynthesis; L-isoleucine from 2-oxobutanoate: step 3/4. It participates in amino-acid biosynthesis; L-valine biosynthesis; L-valine from pyruvate: step 3/4. Functionally, functions in the biosynthesis of branched-chain amino acids. Catalyzes the dehydration of (2R,3R)-2,3-dihydroxy-3-methylpentanoate (2,3-dihydroxy-3-methylvalerate) into 2-oxo-3-methylpentanoate (2-oxo-3-methylvalerate) and of (2R)-2,3-dihydroxy-3-methylbutanoate (2,3-dihydroxyisovalerate) into 2-oxo-3-methylbutanoate (2-oxoisovalerate), the penultimate precursor to L-isoleucine and L-valine, respectively. This chain is Dihydroxy-acid dehydratase 2, found in Bordetella bronchiseptica (strain ATCC BAA-588 / NCTC 13252 / RB50) (Alcaligenes bronchisepticus).